Consider the following 254-residue polypeptide: Ribosomal RNA large subunit methyltransferase E (254 aa).

Residues 1-18 show a composition bias toward gly residues; sequence MTNSGKTGGKSGKGGTGG. The disordered stretch occupies residues 1–26; that stretch reads MTNSGKTGGKSGKGGTGGARALKVRV. Residues Gly-89, Trp-91, Asp-119, Asp-135, and Asp-159 each coordinate S-adenosyl-L-methionine. Residue Lys-199 is the Proton acceptor of the active site.

This sequence belongs to the class I-like SAM-binding methyltransferase superfamily. RNA methyltransferase RlmE family.

It is found in the cytoplasm. It carries out the reaction uridine(2552) in 23S rRNA + S-adenosyl-L-methionine = 2'-O-methyluridine(2552) in 23S rRNA + S-adenosyl-L-homocysteine + H(+). Functionally, specifically methylates the uridine in position 2552 of 23S rRNA at the 2'-O position of the ribose in the fully assembled 50S ribosomal subunit. This chain is Ribosomal RNA large subunit methyltransferase E, found in Parvibaculum lavamentivorans (strain DS-1 / DSM 13023 / NCIMB 13966).